Here is a 228-residue protein sequence, read N- to C-terminus: MKRRRLAQHFLRDPSVAEYIAGLVPSGLDVIEVGPGAGALTIPLAKRSKTVYAIEIDKALAERLRGIAPPNVVIIVGDALEVEWPRADFFVSNVPYSITSPLLFKLIRHRLPAVLTIQREVAERLVARPGSEDYGRLTVAVQCFYDVEILRVLPPYVFDPPPKVYSAVVRLMPKAPCVDNFDEFEKFSAWLFSARRKTLRRLKLADSTKRVYQLTLEELVELFKRHKA.

Positions 9, 11, 34, 55, 78, and 93 each coordinate S-adenosyl-L-methionine.

The protein belongs to the class I-like SAM-binding methyltransferase superfamily. rRNA adenine N(6)-methyltransferase family. RsmA subfamily.

Its subcellular location is the cytoplasm. Specifically dimethylates two adjacent adenosines in the loop of a conserved hairpin near the 3'-end of 16S rRNA in the 30S particle. May play a critical role in biogenesis of 30S subunits. This is Probable ribosomal RNA small subunit methyltransferase A from Pyrobaculum aerophilum (strain ATCC 51768 / DSM 7523 / JCM 9630 / CIP 104966 / NBRC 100827 / IM2).